The sequence spans 266 residues: MKVGIDAGGTLIKIVQESQQGRSYETKLTTNISEVIAWLNANTFESISLTGGNAGVIAENLNVDATIFVEFDASSKGLGMLLKEQGHHIDEYIFANVGTGTSLHYFDGKQQRRVGGVGTGGGMIQGLGYLLSQITDYEALTNLAQSGDRDTIDLKVKHIYKDTEPPIPGELTAANFGNVLHNLDVDFSPANKLASVVGVVGEVITTMAITVARENKTENVVYIGSSFNNNPLLREVIEDYTVLRGFKPYYIENGAFSGALGAIYLN.

ATP is bound at residue 6–13 (DAGGTLIK). The active-site Proton acceptor is the Glu70. Residues Thr99, 121–125 (GGMIQ), Tyr137, and Ser225 contribute to the ATP site.

Belongs to the type II pantothenate kinase family. Homodimer.

The protein resides in the cytoplasm. It carries out the reaction (R)-pantothenate + ATP = (R)-4'-phosphopantothenate + ADP + H(+). Its pathway is cofactor biosynthesis; coenzyme A biosynthesis; CoA from (R)-pantothenate: step 1/5. Catalyzes the phosphorylation of pantothenate (Pan), the first step in CoA biosynthesis. In Staphylococcus haemolyticus (strain JCSC1435), this protein is Type II pantothenate kinase.